We begin with the raw amino-acid sequence, 414 residues long: Esterase FrsA (414 aa).

This sequence belongs to the FrsA family.

The catalysed reaction is a carboxylic ester + H2O = an alcohol + a carboxylate + H(+). In terms of biological role, catalyzes the hydrolysis of esters. The protein is Esterase FrsA of Escherichia coli O139:H28 (strain E24377A / ETEC).